A 257-amino-acid chain; its full sequence is Ribonuclease HII (257 aa).

In terms of domain architecture, RNase H type-2 spans 70–257 (EFIAGIDEVG…PIKSMVAGGN (188 aa)). Residues Asp-76, Glu-77, and Asp-168 each coordinate a divalent metal cation.

The protein belongs to the RNase HII family. Mn(2+) is required as a cofactor. It depends on Mg(2+) as a cofactor.

It is found in the cytoplasm. It catalyses the reaction Endonucleolytic cleavage to 5'-phosphomonoester.. Endonuclease that specifically degrades the RNA of RNA-DNA hybrids. In Streptococcus suis (strain 98HAH33), this protein is Ribonuclease HII.